The sequence spans 600 residues: Arginine--tRNA ligase (600 aa).

The 'HIGH' region signature appears at 123–133 (PNVAKPMHVGH).

Belongs to the class-I aminoacyl-tRNA synthetase family. In terms of assembly, monomer.

Its subcellular location is the cytoplasm. It catalyses the reaction tRNA(Arg) + L-arginine + ATP = L-arginyl-tRNA(Arg) + AMP + diphosphate. The protein is Arginine--tRNA ligase of Caulobacter vibrioides (strain NA1000 / CB15N) (Caulobacter crescentus).